The chain runs to 290 residues: Nucleotide-binding protein Sde_3181 (290 aa).

8-15 (GRSGSGKT) serves as a coordination point for ATP. A GTP-binding site is contributed by 60-63 (DARN).

This sequence belongs to the RapZ-like family.

Its function is as follows. Displays ATPase and GTPase activities. The protein is Nucleotide-binding protein Sde_3181 of Saccharophagus degradans (strain 2-40 / ATCC 43961 / DSM 17024).